Consider the following 1405-residue polypeptide: Protein translocase subunit SecA (1405 aa).

Residues 1–1099 (MHMKIKKFKK…SDYKKLNEDE (1099 aa)) form a protein translocase subunit SecA region. Residues Q88, 106–110 (GEGKS), and D494 contribute to the ATP site. The unknown stretch occupies residues 1100-1405 (SDDDIKAFYK…LDYLKENNKK (306 aa)).

This sequence belongs to the SecA family. As to quaternary structure, monomer and homodimer. Part of the essential Sec protein translocation apparatus which comprises SecA, SecYEG and auxiliary proteins SecDF. Other proteins may also be involved.

Its subcellular location is the cell membrane. The protein resides in the cytoplasm. The catalysed reaction is ATP + H2O + cellular proteinSide 1 = ADP + phosphate + cellular proteinSide 2.. Functionally, part of the Sec protein translocase complex. Interacts with the SecYEG preprotein conducting channel. Has a central role in coupling the hydrolysis of ATP to the transfer of proteins into and across the cell membrane, serving as an ATP-driven molecular motor driving the stepwise translocation of polypeptide chains across the membrane. This chain is Protein translocase subunit SecA, found in Malacoplasma penetrans (strain HF-2) (Mycoplasma penetrans).